The primary structure comprises 270 residues: Flavin-dependent thymidylate synthase (270 aa).

A ThyX domain is found at 13–218 (GFVRLVDQMG…PLAWAAFEEH (206 aa)). FAD-binding positions include Ser59, 82–84 (RHR), and Glu90. DUMP-binding positions include 79–82 (QWFR), 90–94 (EISGR), and Arg157. The ThyX motif motif lies at 82–92 (RHRTASVNEIS). Residues 173-175 (DLH) and His179 each bind FAD. Arg184 provides a ligand contact to dUMP. The active-site Involved in ionization of N3 of dUMP, leading to its activation is Arg184.

The protein belongs to the thymidylate synthase ThyX family. Homotetramer. Requires FAD as cofactor.

It catalyses the reaction dUMP + (6R)-5,10-methylene-5,6,7,8-tetrahydrofolate + NADPH + H(+) = dTMP + (6S)-5,6,7,8-tetrahydrofolate + NADP(+). It functions in the pathway pyrimidine metabolism; dTTP biosynthesis. In terms of biological role, catalyzes the reductive methylation of 2'-deoxyuridine-5'-monophosphate (dUMP) to 2'-deoxythymidine-5'-monophosphate (dTMP) while utilizing 5,10-methylenetetrahydrofolate (mTHF) as the methyl donor, and NADPH and FADH(2) as the reductant. The sequence is that of Flavin-dependent thymidylate synthase from Thermus thermophilus (strain ATCC 27634 / DSM 579 / HB8).